Here is a 261-residue protein sequence, read N- to C-terminus: uncharacterized protein (261 aa).

Residues 1–22 are disordered; it reads MGVADNEYISVPTGEPVQQQPQ. The next 3 membrane-spanning stretches (helical) occupy residues 92–112, 122–142, and 147–167; these read IIIL…ILGL, IVVM…IFLF, and INTI…LMNY.

The protein localises to the membrane. This is an uncharacterized protein from Dictyostelium discoideum (Social amoeba).